Consider the following 131-residue polypeptide: Glycine cleavage system H protein (131 aa).

Residues 24–106 enclose the Lipoyl-binding domain; the sequence is RVTVGISDHA…YGEGWMFVVE (83 aa). N6-lipoyllysine is present on Lys65.

The protein belongs to the GcvH family. As to quaternary structure, the glycine cleavage system is composed of four proteins: P, T, L and H. It depends on (R)-lipoate as a cofactor.

Functionally, the glycine cleavage system catalyzes the degradation of glycine. The H protein shuttles the methylamine group of glycine from the P protein to the T protein. The polypeptide is Glycine cleavage system H protein (Stenotrophomonas maltophilia (strain K279a)).